Here is a 665-residue protein sequence, read N- to C-terminus: tRNA 5-methylaminomethyl-2-thiouridine biosynthesis bifunctional protein MnmC (665 aa).

The interval 1-243 (MSQTSLHHAR…KREMLAGERA (243 aa)) is tRNA (mnm(5)s(2)U34)-methyltransferase. The interval 268 to 665 (IGGGIASAMT…RKLLKGKPLQ (398 aa)) is FAD-dependent cmnm(5)s(2)U34 oxidoreductase.

The protein in the N-terminal section; belongs to the methyltransferase superfamily. tRNA (mnm(5)s(2)U34)-methyltransferase family. It in the C-terminal section; belongs to the DAO family. It depends on FAD as a cofactor.

The protein localises to the cytoplasm. The catalysed reaction is 5-aminomethyl-2-thiouridine(34) in tRNA + S-adenosyl-L-methionine = 5-methylaminomethyl-2-thiouridine(34) in tRNA + S-adenosyl-L-homocysteine + H(+). In terms of biological role, catalyzes the last two steps in the biosynthesis of 5-methylaminomethyl-2-thiouridine (mnm(5)s(2)U) at the wobble position (U34) in tRNA. Catalyzes the FAD-dependent demodification of cmnm(5)s(2)U34 to nm(5)s(2)U34, followed by the transfer of a methyl group from S-adenosyl-L-methionine to nm(5)s(2)U34, to form mnm(5)s(2)U34. The protein is tRNA 5-methylaminomethyl-2-thiouridine biosynthesis bifunctional protein MnmC of Aeromonas hydrophila subsp. hydrophila (strain ATCC 7966 / DSM 30187 / BCRC 13018 / CCUG 14551 / JCM 1027 / KCTC 2358 / NCIMB 9240 / NCTC 8049).